The sequence spans 145 residues: Ribonuclease H (145 aa).

An RNase H type-1 domain is found at methionine 1–aspartate 141. Mg(2+)-binding residues include aspartate 9, glutamate 47, aspartate 69, and aspartate 133.

Belongs to the RNase H family. Monomer. Requires Mg(2+) as cofactor.

The protein resides in the cytoplasm. The catalysed reaction is Endonucleolytic cleavage to 5'-phosphomonoester.. Functionally, endonuclease that specifically degrades the RNA of RNA-DNA hybrids. The chain is Ribonuclease H from Hydrogenovibrio crunogenus (strain DSM 25203 / XCL-2) (Thiomicrospira crunogena).